The primary structure comprises 424 residues: Tyrosine--tRNA ligase (424 aa).

Tyr37 contacts L-tyrosine. Positions 42-51 (PTADSLHLGH) match the 'HIGH' region motif. L-tyrosine contacts are provided by Tyr175 and Gln179. Positions 235-239 (KFGKT) match the 'KMSKS' region motif. Residue Lys238 coordinates ATP. An S4 RNA-binding domain is found at 357–414 (ADLQQALVNAELVPSRGQARTMIGSNAVAINGEKQADPEYVFTDADRLFGRYTLLRRG).

The protein belongs to the class-I aminoacyl-tRNA synthetase family. TyrS type 1 subfamily. Homodimer.

It is found in the cytoplasm. The catalysed reaction is tRNA(Tyr) + L-tyrosine + ATP = L-tyrosyl-tRNA(Tyr) + AMP + diphosphate + H(+). In terms of biological role, catalyzes the attachment of tyrosine to tRNA(Tyr) in a two-step reaction: tyrosine is first activated by ATP to form Tyr-AMP and then transferred to the acceptor end of tRNA(Tyr). The chain is Tyrosine--tRNA ligase from Yersinia pseudotuberculosis serotype O:1b (strain IP 31758).